The primary structure comprises 211 residues: FMN-dependent NADH:quinone oxidoreductase 2 (211 aa).

17-19 contributes to the FMN binding site; that stretch reads SYS.

This sequence belongs to the azoreductase type 1 family. Homodimer. Requires FMN as cofactor.

The enzyme catalyses 2 a quinone + NADH + H(+) = 2 a 1,4-benzosemiquinone + NAD(+). The catalysed reaction is N,N-dimethyl-1,4-phenylenediamine + anthranilate + 2 NAD(+) = 2-(4-dimethylaminophenyl)diazenylbenzoate + 2 NADH + 2 H(+). Its function is as follows. Quinone reductase that provides resistance to thiol-specific stress caused by electrophilic quinones. Also exhibits azoreductase activity. Catalyzes the reductive cleavage of the azo bond in aromatic azo compounds to the corresponding amines. This chain is FMN-dependent NADH:quinone oxidoreductase 2, found in Bacillus licheniformis (strain ATCC 14580 / DSM 13 / JCM 2505 / CCUG 7422 / NBRC 12200 / NCIMB 9375 / NCTC 10341 / NRRL NRS-1264 / Gibson 46).